Here is a 958-residue protein sequence, read N- to C-terminus: Unconventional myosin-Ih (958 aa).

A Myosin motor domain is found at 12-691 (GVQDFVLLDA…TLFATEDAFE (680 aa)). ATP is bound at residue 105–112 (GESGAGKT). Ser365 carries the phosphoserine modification. The tract at residues 568–590 (LSSLLEILISKEPSYIRCIKPNE) is actin-binding. 2 IQ domains span residues 694 to 716 (KHQLVSRIQATYKGCLGRREYMK) and 717 to 746 (KRQAATKLEAHWRGVLARKEIKRRRWAVQI). The TH1 domain maps to 773–955 (RKNYILNLRY…NGQLRVVSAG (183 aa)).

It belongs to the TRAFAC class myosin-kinesin ATPase superfamily. Myosin family. As to expression, highly expressed in the central nervous system, including the forebrain, midbrain and lower medulla. In the lower medulla, it is broadly expressed throughout the reticular formation. It is expressed in the retrotrapezoid nucleus and the nucleus of the solitary tract, as well as motor neurons of the facial, vagal and ambiguus nuclei. Expressed in neonatal inner-ear organs.

In terms of biological role, myosins are actin-based motor molecules with ATPase activity. Unconventional myosins serve in intracellular movements. Their highly divergent tails are presumed to bind to membranous compartments, which would be moved relative to actin filaments. This chain is Unconventional myosin-Ih (Myo1h), found in Mus musculus (Mouse).